We begin with the raw amino-acid sequence, 148 residues long: Cuticle protein CP1499 (148 aa).

Calcified shell.

The sequence is that of Cuticle protein CP1499 from Cancer pagurus (Rock crab).